The primary structure comprises 425 residues: MAAKWEKLEGNVGVLTIEVDAKEVNNSIDAAFKKVVKTINVPGFRKGKMPRPLFEQRFGVESLYQDALDIILPKAYGEAIDEAGIFPVAHPEIDIEKFEKNANLIFTAKVTVKPEVKLGEYKGLAVEKVETTVTDEDVENELKSLQERQAELVVKEEGTVENGDTAVIDFEGFVDGEAFEGGKGENYSLAIGSGTFIPGFEEQLIGLKSGESKDVEVSFPEEYHAAELAGKPATFKVTVHEIKTKELPELNDEFAKEADEAVATLDELKAKLRTNLEEGKKHEAEHKVRDEVVELAAANAEIDIPEAMIDTELDRMVREFEQRLSQQGMNLELYYQFTGTDADKLKEQMKEDAQKRVRINLVLEAIIEAENIEVTEEEVTAEVEKMAEMYGMPVDAIKQALGSVDALAEDLKVRKAVDFLVENAA.

The region spanning 163 to 248 (GDTAVIDFEG…VHEIKTKELP (86 aa)) is the PPIase FKBP-type domain.

The protein belongs to the FKBP-type PPIase family. Tig subfamily.

The protein resides in the cytoplasm. It catalyses the reaction [protein]-peptidylproline (omega=180) = [protein]-peptidylproline (omega=0). Functionally, involved in protein export. Acts as a chaperone by maintaining the newly synthesized protein in an open conformation. Functions as a peptidyl-prolyl cis-trans isomerase. This chain is Trigger factor, found in Bacillus cereus (strain Q1).